Here is a 289-residue protein sequence, read N- to C-terminus: RING-H2 finger protein ATL30 (289 aa).

Residues 26 to 46 traverse the membrane as a helical segment; sequence VIILTVILLVVFFIGFFAIYF. An RING-type; atypical zinc finger spans residues 114–157; sequence CAICLLEFEEEHILLRLLTTCYHVFHQECIDQWLESNKTCPVCR. The tract at residues 181-206 is disordered; it reads HENRDQEQTSTSNEVMLSRQSSGNNE. The segment covering 188–204 has biased composition (polar residues); it reads QTSTSNEVMLSRQSSGN.

Belongs to the RING-type zinc finger family. ATL subfamily.

The protein localises to the membrane. It catalyses the reaction S-ubiquitinyl-[E2 ubiquitin-conjugating enzyme]-L-cysteine + [acceptor protein]-L-lysine = [E2 ubiquitin-conjugating enzyme]-L-cysteine + N(6)-ubiquitinyl-[acceptor protein]-L-lysine.. The protein operates within protein modification; protein ubiquitination. The protein is RING-H2 finger protein ATL30 (ATL30) of Arabidopsis thaliana (Mouse-ear cress).